The following is a 500-amino-acid chain: Arabinofuranosidase/B-xylosidase (500 aa).

The signal sequence occupies residues 1–21; that stretch reads MLSNARIIAAGCIAAGSLVAA. The N-linked (GlcNAc...) asparagine glycan is linked to Asn-467.

It belongs to the glycosyl hydrolase 54 family.

It catalyses the reaction Hydrolysis of terminal non-reducing alpha-L-arabinofuranoside residues in alpha-L-arabinosides.. It carries out the reaction Hydrolysis of (1-&gt;4)-beta-D-xylans, to remove successive D-xylose residues from the non-reducing termini.. This is Arabinofuranosidase/B-xylosidase (xyl1) from Trichoderma koningii (Hypocrea koningii).